A 321-amino-acid chain; its full sequence is Transcription factor MYB60 (321 aa).

HTH myb-type domains lie at 9–65 (KVGI…RPGI) and 66–116 (KRGN…KKKI). DNA-binding regions (H-T-H motif) lie at residues 37-61 (WRSV…TNYL) and 89-112 (WAAI…NTHL). Residues Cys-49 and Cys-53 each carry the S-nitrosocysteine modification. 2 disordered regions span residues 196-215 (SPKA…EGSI) and 263-291 (HHQT…QKKH). Over residues 206–215 (QNSSLEEGSI) the composition is skewed to polar residues. Basic and acidic residues predominate over residues 273 to 290 (SDDHDHDHEMKMDHDQKK).

As to expression, restricted to stomatal guard cells. Mostly expressed in leaves, cotyledons, hypocotyls, seeds and ripened berry skins.

It localises to the nucleus. Its function is as follows. Transcription factor involved in the regulation of gene (e.g. drought-regulated and flavonoid biosynthetic genes) expression and stomatal movements leading to negative regulation of responses to drought and responses to other physiological stimuli (e.g. light). In Vitis vinifera (Grape), this protein is Transcription factor MYB60.